The primary structure comprises 70 residues: Small ribosomal subunit protein bS21 (70 aa).

This sequence belongs to the bacterial ribosomal protein bS21 family.

The chain is Small ribosomal subunit protein bS21 from Laribacter hongkongensis (strain HLHK9).